The following is a 305-amino-acid chain: LysM and putative peptidoglycan-binding domain-containing protein 3 (305 aa).

Residues 1 to 221 (MTGRNQHNGF…PYYGADWGMR (221 aa)) are Extracellular-facing. Asn-29 is a glycosylation site (N-linked (GlcNAc...) asparagine). Positions 31–60 (SETEYSEEDGEAFELRSRGRERHHRSTSRD) are disordered. The LysM domain maps to 68 to 112 (LIREIKEGDTLISISLQYFCTVADIKRANNLLTEQDFFALRSLRI). The segment covering 121–144 (TETHNTAPHKSSSPSGTCRITETP) has biased composition (polar residues). Residues 121–156 (TETHNTAPHKSSSPSGTCRITETPVSGASLDSTSSS) form a disordered region. Over residues 146 to 156 (SGASLDSTSSS) the composition is skewed to low complexity. A helical membrane pass occupies residues 222–242 (WWTAVAIMLVVGIVTPVFYLL). Residues 243–305 (YYEVLMKADV…QHHVKHQEET (63 aa)) are Cytoplasmic-facing.

It is found in the cell membrane. The protein localises to the golgi apparatus. In terms of biological role, essential for Golgi structural integrity. The sequence is that of LysM and putative peptidoglycan-binding domain-containing protein 3 (lysmd3) from Danio rerio (Zebrafish).